Reading from the N-terminus, the 70-residue chain is uncharacterized protein (70 aa).

This sequence belongs to the opacity porin family.

This is an uncharacterized protein from Haemophilus influenzae (strain ATCC 51907 / DSM 11121 / KW20 / Rd).